Here is a 479-residue protein sequence, read N- to C-terminus: Oxysterol-binding protein homolog C23B6.01c (479 aa).

4 positions are modified to phosphoserine: S328, S408, S409, and S421. The segment covering K404 to S418 has biased composition (basic and acidic residues). The tract at residues K404–L479 is disordered. Residues Q439–G452 are compositionally biased toward polar residues. Positions K470–L479 are enriched in basic and acidic residues.

Belongs to the OSBP family.

It is found in the cytoplasm. Its subcellular location is the nucleus. The protein is Oxysterol-binding protein homolog C23B6.01c of Schizosaccharomyces pombe (strain 972 / ATCC 24843) (Fission yeast).